We begin with the raw amino-acid sequence, 115 residues long: Probable 4-amino-4-deoxy-L-arabinose-phosphoundecaprenol flippase subunit ArnE (115 aa).

3 helical membrane-spanning segments follow: residues 42-62, 65-85, and 93-112; these read PWPW…LLLL, VEVG…TLVA, and VDRR…ALLG. In terms of domain architecture, EamA spans 46–113; it reads LALLALGLGL…IVAGVALLGR (68 aa).

Belongs to the ArnE family. In terms of assembly, heterodimer of ArnE and ArnF.

The protein resides in the cell inner membrane. It functions in the pathway bacterial outer membrane biogenesis; lipopolysaccharide biosynthesis. Translocates 4-amino-4-deoxy-L-arabinose-phosphoundecaprenol (alpha-L-Ara4N-phosphoundecaprenol) from the cytoplasmic to the periplasmic side of the inner membrane. The sequence is that of Probable 4-amino-4-deoxy-L-arabinose-phosphoundecaprenol flippase subunit ArnE from Pseudomonas paraeruginosa (strain DSM 24068 / PA7) (Pseudomonas aeruginosa (strain PA7)).